The sequence spans 266 residues: Ribonuclease HII (266 aa).

Positions 19–38 (HPGMIRDKEKPAPTKPGKGV) are disordered. Residues 58-246 (WPVAGCDEAG…VVAARQKHQP (189 aa)) enclose the RNase H type-2 domain. Residues aspartate 64, glutamate 65, and aspartate 155 each coordinate a divalent metal cation.

It belongs to the RNase HII family. Mn(2+) serves as cofactor. The cofactor is Mg(2+).

The protein localises to the cytoplasm. The catalysed reaction is Endonucleolytic cleavage to 5'-phosphomonoester.. In terms of biological role, endonuclease that specifically degrades the RNA of RNA-DNA hybrids. The chain is Ribonuclease HII from Rhodopseudomonas palustris (strain BisB18).